The following is a 412-amino-acid chain: 2-methylacyl-CoA dehydrogenase, mitochondrial (412 aa).

The N-terminal 25 residues, 1-25 (MHKLFAVRSLSSAIVKSFKSLQNQQ), are a transit peptide targeting the mitochondrion. Residues 154-163 (LAMSEPNAGS) and 187-189 (WCT) contribute to the FAD site. A substrate-binding site is contributed by S163. Substrate contacts are provided by residues 209-210 (SK), Y264, and 271-274 (DLER). The Proton acceptor role is filled by E273. Residues R299, Q310, and 367–371 (QCLGG) each bind FAD. Residue 394-395 (AG) coordinates substrate. 396–398 (TSE) contributes to the FAD binding site.

This sequence belongs to the acyl-CoA dehydrogenase family. Homotetramer. Requires FAD as cofactor. As to expression, expressed in flowers.

It localises to the mitochondrion. It catalyses the reaction 2-methylbutanoyl-CoA + oxidized [electron-transfer flavoprotein] + H(+) = (2E)-2-methylbut-2-enoyl-CoA + reduced [electron-transfer flavoprotein]. Its function is as follows. Short/branched-chain acyl-CoA dehydrogenase (SBCAD). Uses 2-methylbutanoyl-CoA as substrate. Minor activity with the straight-chain substrates, butanoyl-CoA, valeryl-CoA, hexanoyl-CoA, and octanoyl-CoA but no activity with isovaleryl-CoA. The chain is 2-methylacyl-CoA dehydrogenase, mitochondrial (2MBCD) from Solanum tuberosum (Potato).